Here is a 252-residue protein sequence, read N- to C-terminus: Uridylate kinase (252 aa).

Residue 20–23 (KLSG) coordinates ATP. Residues 28–33 (GGGGLG) are involved in allosteric activation by GTP. Gly62 serves as a coordination point for UMP. ATP is bound by residues Gly63 and Arg67. UMP is bound by residues Asp82 and 143 to 150 (MGMPYFST). Positions 171, 177, and 180 each coordinate ATP.

Belongs to the UMP kinase family. As to quaternary structure, homohexamer.

The protein localises to the cytoplasm. It carries out the reaction UMP + ATP = UDP + ADP. It functions in the pathway pyrimidine metabolism; CTP biosynthesis via de novo pathway; UDP from UMP (UMPK route): step 1/1. With respect to regulation, allosterically activated by GTP. Inhibited by UTP. Its function is as follows. Catalyzes the reversible phosphorylation of UMP to UDP. The polypeptide is Uridylate kinase (Streptomyces avermitilis (strain ATCC 31267 / DSM 46492 / JCM 5070 / NBRC 14893 / NCIMB 12804 / NRRL 8165 / MA-4680)).